The primary structure comprises 193 residues: Ubiquitin-conjugating enzyme E2 E1 (193 aa).

Residues 1–45 (MSDDDSRASTSSSSSSSSNQQTEKETNTPKKKESKVSMSKNSKLL) are disordered. An N-acetylserine modification is found at Ser2. A compositionally biased stretch (low complexity) spans 8–18 (ASTSSSSSSSS). The span at 22–35 (TEKETNTPKKKESK) shows a compositional bias: basic and acidic residues. A compositionally biased stretch (polar residues) spans 36 to 45 (VSMSKNSKLL). The region spanning 47–193 (TSAKRIQKEL…ARQWTKRYAT (147 aa)) is the UBC core domain. Cys131 serves as the catalytic Glycyl thioester intermediate. Lys136 is covalently cross-linked (Glycyl lysine isopeptide (Lys-Gly) (interchain with G-Cter in ISG15)).

It belongs to the ubiquitin-conjugating enzyme family. As to quaternary structure, interacts with RNF14. In terms of processing, ISGylation suppresses ubiquitin E2 enzyme activity. Autoubiquitinated in vitro.

It localises to the nucleus. The catalysed reaction is S-ubiquitinyl-[E1 ubiquitin-activating enzyme]-L-cysteine + [E2 ubiquitin-conjugating enzyme]-L-cysteine = [E1 ubiquitin-activating enzyme]-L-cysteine + S-ubiquitinyl-[E2 ubiquitin-conjugating enzyme]-L-cysteine.. It catalyses the reaction S-ubiquitinyl-[E1 ubiquitin-activating enzyme]-L-cysteine + [acceptor protein]-L-lysine = [E1 ubiquitin-activating enzyme]-L-cysteine + N(6)-monoubiquitinyl-[acceptor protein]-L-lysine.. It participates in protein modification; protein ubiquitination. Functionally, accepts ubiquitin from the E1 complex and catalyzes its covalent attachment to other proteins. Catalyzes the covalent attachment of ISG15 to other proteins. Mediates the selective degradation of short-lived and abnormal proteins. In vitro also catalyzes 'Lys-48'-linked polyubiquitination. Catalyzes monoubiquitination of other proteins in both an E3-dependent and E3-independent manner. The sequence is that of Ubiquitin-conjugating enzyme E2 E1 from Homo sapiens (Human).